Here is a 297-residue protein sequence, read N- to C-terminus: Occlusion-derived virus envelope protein E27 (297 aa).

It belongs to the baculoviridae E27 family. In terms of assembly, interacts with host mus209/PCNA, cdc2 and cdk6.

It is found in the virion membrane. In terms of biological role, acts as a cyclin-like protein and plays a role in the modulation of host cell cycle. May promote G2/S arrest by interacting with host mus209/PCNA, cdc2 and cdk6. The cell cycle arrest is characterized by an intact nuclear envelope, concomitant with sustained activity of host cdc2. However, viral DNA replication still occurs in the arrested cells. The chain is Occlusion-derived virus envelope protein E27 from Orgyia pseudotsugata multicapsid polyhedrosis virus (OpMNPV).